The chain runs to 445 residues: Anthranilate N-benzoyltransferase protein 3 (445 aa).

Active-site proton acceptor residues include histidine 164 and aspartate 392.

This sequence belongs to the plant acyltransferase family. Post-translationally, N-terminus is blocked.

The catalysed reaction is anthranilate + benzoyl-CoA = N-benzoylanthranilate + CoA. Its pathway is phytoalexin biosynthesis; methoxydianthramide B biosynthesis. In terms of biological role, catalyzes the formation of N-benzoylanthranilate, in the course of methoxydianthramide B, a phytoalexin. Phytoalexins are produced in response to infection by parasites, and are essential for the expression of disease resistance. The sequence is that of Anthranilate N-benzoyltransferase protein 3 (HCBT3) from Dianthus caryophyllus (Carnation).